The sequence spans 117 residues: UPF0642 protein C32H8.05 (117 aa).

The disordered stretch occupies residues 39-117 (DQVNDLTKSS…SNFSKFLKKK (79 aa)). Basic residues predominate over residues 93 to 106 (KWAKKHLKKGKRAK). A compositionally biased stretch (low complexity) spans 107-117 (NSNFSKFLKKK).

It belongs to the UPF0642 family.

The protein resides in the nucleus. It is found in the nucleolus. This chain is UPF0642 protein C32H8.05, found in Schizosaccharomyces pombe (strain 972 / ATCC 24843) (Fission yeast).